Here is a 267-residue protein sequence, read N- to C-terminus: 4-hydroxy-tetrahydrodipicolinate reductase (267 aa).

NAD(+) contacts are provided by residues 8–13 (GAAGRM) and Glu34. Arg35 lines the NADP(+) pocket. NAD(+) contacts are provided by residues 98–100 (GST) and 122–125 (APNM). The active-site Proton donor/acceptor is His155. His156 provides a ligand contact to (S)-2,3,4,5-tetrahydrodipicolinate. The active-site Proton donor is the Lys159. 165-166 (GT) lines the (S)-2,3,4,5-tetrahydrodipicolinate pocket.

It belongs to the DapB family.

The protein resides in the cytoplasm. The enzyme catalyses (S)-2,3,4,5-tetrahydrodipicolinate + NAD(+) + H2O = (2S,4S)-4-hydroxy-2,3,4,5-tetrahydrodipicolinate + NADH + H(+). It catalyses the reaction (S)-2,3,4,5-tetrahydrodipicolinate + NADP(+) + H2O = (2S,4S)-4-hydroxy-2,3,4,5-tetrahydrodipicolinate + NADPH + H(+). It participates in amino-acid biosynthesis; L-lysine biosynthesis via DAP pathway; (S)-tetrahydrodipicolinate from L-aspartate: step 4/4. Catalyzes the conversion of 4-hydroxy-tetrahydrodipicolinate (HTPA) to tetrahydrodipicolinate. The polypeptide is 4-hydroxy-tetrahydrodipicolinate reductase (Citrifermentans bemidjiense (strain ATCC BAA-1014 / DSM 16622 / JCM 12645 / Bem) (Geobacter bemidjiensis)).